The chain runs to 171 residues: Photosystem I assembly protein Ycf3 (171 aa).

3 TPR repeats span residues 35-68 (AFTY…EVDA), 72-105 (SYIL…NPYL), and 120-153 (GEQA…APTN).

This sequence belongs to the Ycf3 family.

The protein localises to the plastid. It is found in the chloroplast thylakoid membrane. Essential for the assembly of the photosystem I (PSI) complex. May act as a chaperone-like factor to guide the assembly of the PSI subunits. This is Photosystem I assembly protein Ycf3 from Nephroselmis olivacea (Green alga).